The sequence spans 71 residues: Large ribosomal subunit protein bL31 (71 aa).

Zn(2+) is bound by residues Cys-16, Cys-18, Cys-36, and Cys-39.

Belongs to the bacterial ribosomal protein bL31 family. Type A subfamily. In terms of assembly, part of the 50S ribosomal subunit. Zn(2+) serves as cofactor.

Binds the 23S rRNA. This chain is Large ribosomal subunit protein bL31, found in Thermotoga maritima (strain ATCC 43589 / DSM 3109 / JCM 10099 / NBRC 100826 / MSB8).